A 469-amino-acid polypeptide reads, in one-letter code: Rubisco accumulation factor 1, chloroplastic (469 aa).

Residues 1–46 (MLSLSHPHPHPASTTAAAAARHHHRRNAPFAPHHRRRRRFAHLTTS) constitute a chloroplast transit peptide. Residues 1–78 (MLSLSHPHPH…TPPPTAPPDQ (78 aa)) are disordered. Residues 20 to 41 (ARHHHRRNAPFAPHHRRRRRFA) show a composition bias toward basic residues. Residues 90-281 (LPDKYKDLDL…PARARVEAEL (192 aa)) form an N-terminal alpha-helix region. The stretch at 246–294 (RQSREAIDAEDSVAELERALEVVDTEPARARVEAELDRARRKAAGEEVD) forms a coiled coil. The C-terminal beta sheet stretch occupies residues 311-456 (VPVVRLMYGE…AEVLVVVRPP (146 aa)).

Belongs to the RAF family.

It is found in the plastid. It localises to the chloroplast. Required for assembly or stability of RuBisCO. Acts at a postchaperonin step to fold and/or assemble the large subunit (LS) into RuBisCO. The sequence is that of Rubisco accumulation factor 1, chloroplastic (RAF1) from Oryza sativa subsp. japonica (Rice).